We begin with the raw amino-acid sequence, 261 residues long: Phosphatidylglycerol--prolipoprotein diacylglyceryl transferase (261 aa).

Helical transmembrane passes span 20–40, 54–74, and 94–114; these read LAIH…VWLA, IIDF…LYYV, and GGGA…VFSY. Arg139 is a binding site for a 1,2-diacyl-sn-glycero-3-phospho-(1'-sn-glycerol). 3 consecutive transmembrane segments (helical) span residues 175 to 195, 205 to 225, and 235 to 255; these read MPTF…VMVF, GDIF…VEGM, and ARVS…LFIY.

Belongs to the Lgt family.

The protein localises to the cell membrane. The enzyme catalyses L-cysteinyl-[prolipoprotein] + a 1,2-diacyl-sn-glycero-3-phospho-(1'-sn-glycerol) = an S-1,2-diacyl-sn-glyceryl-L-cysteinyl-[prolipoprotein] + sn-glycerol 1-phosphate + H(+). Its pathway is protein modification; lipoprotein biosynthesis (diacylglyceryl transfer). Its function is as follows. Catalyzes the transfer of the diacylglyceryl group from phosphatidylglycerol to the sulfhydryl group of the N-terminal cysteine of a prolipoprotein, the first step in the formation of mature lipoproteins. The polypeptide is Phosphatidylglycerol--prolipoprotein diacylglyceryl transferase (Lactococcus lactis subsp. lactis (strain IL1403) (Streptococcus lactis)).